Here is a 539-residue protein sequence, read N- to C-terminus: Protein pim1 (539 aa).

A disordered region spans residues 1-53 (MTSNRSTRSSTKREEVSKNGVEKRELDESDVMKNGKKPVKRAKVSSLPKPVRV). Over residues 11–33 (TKREEVSKNGVEKRELDESDVMK) the composition is skewed to basic and acidic residues. Residues 34–43 (NGKKPVKRAK) are compositionally biased toward basic residues. 7 RCC1 repeats span residues 70 to 125 (RLNV…ALSH), 127 to 191 (GRVY…AITD), 192 to 243 (NGCC…ALTT), 244 to 296 (TGKV…AIDN), 298 to 353 (GRVY…ALLE), 354 to 417 (DGRV…AVTS), and 419 to 472 (GKVY…IAGI). Positions 478–539 (EPVANGIKSE…SVLEPSSTTA (62 aa)) are disordered. Residues 486-504 (SEPENEKKLKTEETSKTDD) show a composition bias toward basic and acidic residues. Over residues 514–525 (VTSNGEPSTATS) the composition is skewed to polar residues.

As to quaternary structure, oligomer of dis3, pim1 and spi1. Interacts with ned1.

The protein localises to the nucleus. Functionally, promotes the exchange of Ran(spi1)-bound GDP by GTP. Involved in the control of mitosis. Regulates a variety of nuclear events, including mitotic check-point, chromosome decondensation and mRNA processing/transport. This chain is Protein pim1 (pim1), found in Schizosaccharomyces pombe (strain 972 / ATCC 24843) (Fission yeast).